We begin with the raw amino-acid sequence, 250 residues long: MDYLSLSLTMIFVLIALFLSKSFKAGVEKDMIIATIRAAVQLLIIGYVLSLIFRGDHPVFILLMVLLMLAVAAQNVIKRKKNTIGSFWRVFAALAIVEIVTQGILLSLHIIPLTARYVIPISGMVIGNSMVLSSLFLNRLNSEVGVRKEEIQLILSLGGTPKQSIQRILTSAMKMSMIPTLESQKTLGLVQLPGMMTGQILAGADPIQAVRFQLLIVFTTMASAALTCVILSVLTYPSLFTVHQQLKQNE.

The next 6 membrane-spanning stretches (helical) occupy residues Y3–F23, I32–I52, H57–I77, F91–I111, Y117–L137, and L214–L234.

The protein belongs to the UPF0014 family.

It localises to the cell membrane. In Bacillus subtilis (strain 168), this protein is UPF0014 membrane protein YjkA (yjkA).